Here is a 152-residue protein sequence, read N- to C-terminus: uncharacterized protein (152 aa).

A glycan (N-linked (GlcNAc...) asparagine; by host) is linked at N2. A run of 3 helical transmembrane segments spans residues 5–25, 36–56, and 68–88; these read MILL…MNLW, LNDF…CYIL, and LIIT…QAFI. N113 carries N-linked (GlcNAc...) asparagine; by host glycosylation.

It localises to the membrane. This is an uncharacterized protein from Acanthamoeba polyphaga mimivirus (APMV).